A 188-amino-acid polypeptide reads, in one-letter code: Insulin-like peptide INSL6 (188 aa).

The N-terminal stretch at 1 to 22 (MKQLCCSCLLWLGLLLAPFSQE) is a signal peptide. Cystine bridges form between cysteine 33–cysteine 169, cysteine 45–cysteine 182, and cysteine 168–cysteine 173. Positions 53-158 (FSMEEQSPMT…SGLFWGNHPQ (106 aa)) are cleaved as a propeptide — connecting peptide.

It belongs to the insulin family. As to expression, testis and prostate specific.

The protein localises to the secreted. In terms of biological role, may have a role in sperm development and fertilization. The sequence is that of Insulin-like peptide INSL6 (Insl6) from Rattus norvegicus (Rat).